We begin with the raw amino-acid sequence, 216 residues long: Protein Syd (216 aa).

This sequence belongs to the Syd family.

The protein resides in the cell inner membrane. Its function is as follows. Interacts with the SecY protein in vivo. May bind preferentially to an uncomplexed state of SecY, thus functioning either as a chelating agent for excess SecY in the cell or as a regulatory factor that negatively controls the translocase function. In Shewanella baltica (strain OS223), this protein is Protein Syd.